A 238-amino-acid chain; its full sequence is Probable septum site-determining protein MinC (238 aa).

The protein belongs to the MinC family. Interacts with MinD and FtsZ.

Functionally, cell division inhibitor that blocks the formation of polar Z ring septums. Rapidly oscillates between the poles of the cell to destabilize FtsZ filaments that have formed before they mature into polar Z rings. Prevents FtsZ polymerization. The sequence is that of Probable septum site-determining protein MinC from Blochmanniella floridana.